The sequence spans 109 residues: Flowering-promoting factor 1-like protein 1 (109 aa).

Residues 73 to 81 carry the D-box motif; it reads RGSLDLISL.

This sequence belongs to the FPF1 family. As to quaternary structure, interacts with RPT4. Ubiquitinated. RPT4 mediates its proteasome-dependent degradation. In terms of tissue distribution, specifically expressed in the apical meristem, the elongation zone of root tip, steles of the branch zone, and the young lateral root. Also expressed in spikes. Expressed in roots and spikes (at protein level).

It is found in the cytoplasm. The protein localises to the nucleus. GTP-binding protein that functions in the development of root systems, which are mediated by auxin. Acts as a cell cycle regulator during root development. Proteasome-mediated degradation of the protein is necessary for the transition of metaphase to anaphase in mitosis. This chain is Flowering-promoting factor 1-like protein 1 (RAA1), found in Oryza sativa subsp. japonica (Rice).